The chain runs to 138 residues: MRTLWIVAVLLVGVEGNLLQFNKMIKIMTRKNGIPYYSSYGCYCGWGGQGQPLDATDRCCFVHDCCYEKLTDCSPKTDIYSYSWKSGVIICGEGTPCEKQICECDRVAAVCFGANLGTYKKSYMFYPDFLCTEPSEKC.

The N-terminal stretch at methionine 1–glycine 16 is a signal peptide. 7 disulfide bridges follow: cysteine 42/cysteine 131, cysteine 44/cysteine 60, cysteine 59/cysteine 111, cysteine 65/cysteine 138, cysteine 66/cysteine 104, cysteine 73/cysteine 97, and cysteine 91/cysteine 102. Residues tyrosine 43, glycine 45, and glycine 47 each coordinate Ca(2+). Histidine 63 is a catalytic residue. Aspartate 64 is a binding site for Ca(2+). Aspartate 105 is a catalytic residue.

Monomer. Ca(2+) is required as a cofactor. Contains 7 disulfide bonds. In terms of tissue distribution, expressed by the venom gland.

The protein localises to the secreted. The enzyme catalyses a 1,2-diacyl-sn-glycero-3-phosphocholine + H2O = a 1-acyl-sn-glycero-3-phosphocholine + a fatty acid + H(+). Snake venom phospholipase A2 (PLA2) that shows myotoxic activities. PLA2 catalyzes the calcium-dependent hydrolysis of the 2-acyl groups in 3-sn-phosphoglycerides. In Bothriechis schlegelii (Eyelash palm pitviper), this protein is Basic phospholipase A2 Bs-N6.